Reading from the N-terminus, the 276-residue chain is Diaminopimelate epimerase (276 aa).

Substrate is bound by residues Asn-13, Gln-46, and Asn-66. Cys-75 (proton donor) is an active-site residue. Residues 76-77 (GN), Asn-159, Asn-192, and 210-211 (ER) contribute to the substrate site. The Proton acceptor role is filled by Cys-219. 220–221 (GT) is a binding site for substrate.

The protein belongs to the diaminopimelate epimerase family. In terms of assembly, homodimer.

The protein resides in the cytoplasm. It carries out the reaction (2S,6S)-2,6-diaminopimelate = meso-2,6-diaminopimelate. The protein operates within amino-acid biosynthesis; L-lysine biosynthesis via DAP pathway; DL-2,6-diaminopimelate from LL-2,6-diaminopimelate: step 1/1. In terms of biological role, catalyzes the stereoinversion of LL-2,6-diaminopimelate (L,L-DAP) to meso-diaminopimelate (meso-DAP), a precursor of L-lysine and an essential component of the bacterial peptidoglycan. The chain is Diaminopimelate epimerase from Pseudomonas fluorescens.